The chain runs to 495 residues: Lysine--tRNA ligase (495 aa).

Residues glutamate 406 and glutamate 413 each coordinate Mg(2+).

Belongs to the class-II aminoacyl-tRNA synthetase family. In terms of assembly, homodimer. Requires Mg(2+) as cofactor.

It is found in the cytoplasm. The catalysed reaction is tRNA(Lys) + L-lysine + ATP = L-lysyl-tRNA(Lys) + AMP + diphosphate. The protein is Lysine--tRNA ligase of Leuconostoc mesenteroides subsp. mesenteroides (strain ATCC 8293 / DSM 20343 / BCRC 11652 / CCM 1803 / JCM 6124 / NCDO 523 / NBRC 100496 / NCIMB 8023 / NCTC 12954 / NRRL B-1118 / 37Y).